Here is a 276-residue protein sequence, read N- to C-terminus: Diaminopimelate epimerase (276 aa).

Substrate contacts are provided by Asn-13, Gln-46, and Asn-66. Residue Cys-75 is the Proton donor of the active site. Substrate is bound by residues Gly-76–Asn-77, Asn-159, Asn-192, and Glu-210–Arg-211. Cys-219 serves as the catalytic Proton acceptor. Gly-220–Thr-221 lines the substrate pocket.

The protein belongs to the diaminopimelate epimerase family. As to quaternary structure, homodimer.

It is found in the cytoplasm. It carries out the reaction (2S,6S)-2,6-diaminopimelate = meso-2,6-diaminopimelate. Its pathway is amino-acid biosynthesis; L-lysine biosynthesis via DAP pathway; DL-2,6-diaminopimelate from LL-2,6-diaminopimelate: step 1/1. In terms of biological role, catalyzes the stereoinversion of LL-2,6-diaminopimelate (L,L-DAP) to meso-diaminopimelate (meso-DAP), a precursor of L-lysine and an essential component of the bacterial peptidoglycan. The polypeptide is Diaminopimelate epimerase (Pseudomonas entomophila (strain L48)).